Here is an 87-residue protein sequence, read N- to C-terminus: Large ribosomal subunit protein eL20 (87 aa).

The protein belongs to the eukaryotic ribosomal protein eL20 family. In terms of assembly, part of the 50S ribosomal subunit. Binds 23S rRNA.

In Hyperthermus butylicus (strain DSM 5456 / JCM 9403 / PLM1-5), this protein is Large ribosomal subunit protein eL20.